The primary structure comprises 292 residues: S-adenosyl-L-methionine-dependent Diels-Alderase iccD (292 aa).

Residues 240 to 262 traverse the membrane as a helical segment; sequence LPVVRMFYVVLLVPYLFVRLLGI.

The protein belongs to the class I-like SAM-binding methyltransferase superfamily. Erg6/SMT family. S-adenosyl-L-methionine is required as a cofactor.

It localises to the membrane. It carries out the reaction 3-[(2E,4E,8S,10E,12Z)-4,8-dimethyltetradeca-2,4,10,12-tetraenoyl]-4-hydroxy-5-(4-hydroxyphenyl)-1,2-dihydropyridin-2-one = 8-epi-ilicicolin H. Its pathway is mycotoxin biosynthesis. Its function is as follows. S-adenosyl-l-methionine-dependent Diels-Alderase; part of the gene cluster that mediates the biosynthesis of ilicicolin H, a 4-hydroxy-2-pyridonealkaloid that has potent and broad antifungal activities by inhibiting the mitochondrial respiration chain. IccD catalyzes the Diels-Alder reaction that converts the acyclic 2-pyridone intermediate to 8-epi-ilicicolin H. The biosynthesis of ilicicolin H starts with formation of the tetramic acid by the hybrid PKS-NRPS synthetase iccA with the partnering trans-enoyl reductase iccB since iccA lacks a designated enoylreductase (ER) domain. The cytochrome P450 monooxygenase iccC then catalyzes the ring expansion of the tetramate to the acyclic 2-pyridone. The pericyclase iccD further converts the acyclic 2-pyridone into 8-epi-ilicicolin H. Finally, the epimerase iccE converts 8-epi-ilicicolin H into ilicicolin H via epimerization. IccA to iccE are sufficient for ilicicolin H biosynthesis and the roles of the remaining enzymes, iccF, iccG and iccH within the pathway have still to be determined. The chain is S-adenosyl-L-methionine-dependent Diels-Alderase iccD from Talaromyces variabilis (Penicillium variabile).